We begin with the raw amino-acid sequence, 295 residues long: MMRILLFVATNLAVVLVASITLSLFGFNGFMAANGVDLNLSSLLVFCAVFGFAGSLVSLFISKWMAKMSTGTQIISQPRTRHEQWLLQTVEELSREAGIKMPEVGIFPAYEANAFATGWNRNDALVAVSQGLLERFSPDEVRAVLAHEIGHVANGDMVTLALVQGVVNTFVMFFARIIGNFVDKVIFKNEEGQGIAYYVATIVAELILGILASMIVMWFSRRREYRADEAGAQLAGTSAMIGALQRLRVEQGLPVHMPDTMKAFGINGGLKHGLAGLLMSHPPLEDRIEALRRRG.

2 helical membrane-spanning segments follow: residues 4–24 and 41–61; these read ILLF…TLSL and SSLL…SLFI. A Zn(2+)-binding site is contributed by His147. The active site involves Glu148. Residue His151 participates in Zn(2+) binding. Helical transmembrane passes span 158–178 and 199–219; these read VTLA…ARII and VATI…VMWF. A Zn(2+)-binding site is contributed by Glu224.

The protein belongs to the peptidase M48B family. The cofactor is Zn(2+).

It is found in the cell inner membrane. This is Protease HtpX from Pseudomonas putida (strain GB-1).